The chain runs to 137 residues: Lysozyme (137 aa).

An N-terminal signal peptide occupies residues 1 to 18 (MQKLIIFALVVLCVGSEA). A C-type lysozyme domain is found at 19 to 137 (KTFTRCGLVH…QGSLPDISSC (119 aa)). 4 cysteine pairs are disulfide-bonded: Cys24–Cys137, Cys45–Cys127, Cys79–Cys93, and Cys89–Cys107. Residues Glu50 and Asp67 contribute to the active site.

Belongs to the glycosyl hydrolase 22 family.

The enzyme catalyses Hydrolysis of (1-&gt;4)-beta-linkages between N-acetylmuramic acid and N-acetyl-D-glucosamine residues in a peptidoglycan and between N-acetyl-D-glucosamine residues in chitodextrins.. Functionally, lysozymes have primarily a bacteriolytic function; those in tissues and body fluids are associated with the monocyte-macrophage system and enhance the activity of immunoagents. Active against E.coli and M.luteus. This chain is Lysozyme, found in Bombyx mori (Silk moth).